Consider the following 600-residue polypeptide: QTTEILLCLSPVEVASLKEGINFFRNKSTGKDYILYKNKSRLRACKNMCKHQGGLFIKDIEDLAGRSVRCTKHNWKLDVSTMKYINPPESFCQDELVVEMDENNRLLLLELNPPNPWDLQPRSPEELAFGEVQITYLTHACMDLKLGDKRMVFDPWLIGPAFARGWWLLHEPPSDWLERLCQADLIYISHLHSDHLSYPTLKKLAGRRPDIPIYVGNTERPVFWNLNQSGVQLTNINVMPFGIWQQVDKNLRFMILMDGVHPEMDTCIIVEYKGHKILNTVDCTRPNGGRLPMKVALMMSDFAGGASGFPMTFSGGKFTEEWKAQFIKTERKKLLNYKARLVKNLQPRIYCPFAGYFVESHPSDKYIKETNTKNDPNELNNLIKKNSDVITWTPRPGATLDLGRMLKDPTDSKGIIEPPEGTKIYKDSWDFEPYLEILNAAVGDEIFLHSSWIKEYFTWAGFKDYNLVVRMIETDEDFNPFPGGYDYLVDFLDLSFPKERPQREHPYEEIHSRVDVIRHVVKNGLLWDELYIGFQTRLQRDPDIYHHLFWNHFQIKLPLTPPNWKSFLMCCEQNGPGILQFSTERTNEPNRNKFSVENKA.

The region spanning L9–L107 is the Rieske domain. Residues C49, H51, C70, and H73 each coordinate [2Fe-2S] cluster.

Belongs to the CMP-Neu5Ac hydroxylase family. [2Fe-2S] cluster is required as a cofactor.

It is found in the cytoplasm. It carries out the reaction CMP-N-acetyl-beta-neuraminate + 2 Fe(II)-[cytochrome b5] + O2 + 2 H(+) = CMP-N-glycoloyl-beta-neuraminate + 2 Fe(III)-[cytochrome b5] + H2O. It participates in amino-sugar metabolism; N-acetylneuraminate metabolism. Sialic acids are components of carbohydrate chains of glycoconjugates and are involved in cell-cell recognition and cell-pathogen interactions. Catalyzes the conversion of CMP-N-acetylneuraminic acid (CMP-Neu5Ac) into its hydroxylated derivative CMP-N-glycolylneuraminic acid (CMP-Neu5Gc), a sialic acid abundantly expressed at the surface of many cells. The polypeptide is Cytidine monophosphate-N-acetylneuraminic acid hydroxylase (CMAH) (Gorilla gorilla gorilla (Western lowland gorilla)).